Reading from the N-terminus, the 195-residue chain is Probable nicotinate-nucleotide adenylyltransferase (195 aa).

Belongs to the NadD family.

The enzyme catalyses nicotinate beta-D-ribonucleotide + ATP + H(+) = deamido-NAD(+) + diphosphate. It functions in the pathway cofactor biosynthesis; NAD(+) biosynthesis; deamido-NAD(+) from nicotinate D-ribonucleotide: step 1/1. Its function is as follows. Catalyzes the reversible adenylation of nicotinate mononucleotide (NaMN) to nicotinic acid adenine dinucleotide (NaAD). The chain is Probable nicotinate-nucleotide adenylyltransferase from Bordetella petrii (strain ATCC BAA-461 / DSM 12804 / CCUG 43448).